Consider the following 548-residue polypeptide: SH2/SH3 adapter protein dreadlocks (548 aa).

Disordered stretches follow at residues 12–37, 57–92, and 113–146; these read IPDS…QHQN, QVPV…TASS, and GSGS…MKHG. Over residues 20-37 the composition is skewed to low complexity; that stretch reads QQYPQQQQHPPQLPQHQN. Residues 113 to 122 are compositionally biased toward gly residues; sequence GSGSANGSGS. The segment covering 123–135 has biased composition (low complexity); that stretch reads GNSSSGSAAGNAG. One can recognise an SH3 1 domain in the interval 150–209; it reads DDVCYVVAKYDYAAQGAQELDLRKNERYLLLDDSKHWWRVQNSRNQSGYVPSNYVKKEKP. The interval 219-247 is disordered; sequence VKKGSGSKTLPNCSPSRQVESPTMSRRLP. Over residues 227–242 the composition is skewed to polar residues; that stretch reads TLPNCSPSRQVESPTM. 2 SH3 domains span residues 252-311 and 324-386; these read EAIG…EDCD and NVLD…ELND. The tract at residues 398-442 is disordered; sequence SAGNGNGGGSNGGAGGGGGNDSMERRNEGNKPAAQSSGQPIERPN. The segment covering 401–417 has biased composition (gly residues); sequence NGNGGGSNGGAGGGGGN. An SH2 domain is found at 448-542; the sequence is WYYGAITRSQ…GEKLYLVRSL (95 aa).

As to quaternary structure, interacts (via SH2 and SH3 domains) with Dscam1 (via cytoplasmic domain); the interaction is direct and requires Dscam1 to be phosphorylated. Interacts (via SH2 and SH3 domains) with InR/Insulin-like receptor (via C-terminal cytoplasmic region); the interaction requires InR kinase activity, probably for autophosphorylation stimulated by insulin signaling. Interacts with Ptp61F (via C-terminus); this interaction is independent of insulin stimulation. Interacts (via SH3 domain 2) with Pak (via N-terminal PXXP motif). Phosphorylated by Src42A and possibly by other tyrosine kinases. Constitutively dephosphorylated by its binding partner Ptp61F.

The protein resides in the perikaryon. It localises to the cell projection. The protein localises to the axon. It is found in the growth cone. Adapter protein that links cell surface receptor tyrosine phosphorylation to downstream signaling pathways and effectors, many of which are involved in regulation of the actin cytoskeleton. Recruited by Dscam1/Down syndrome cell adhesion molecule homolog and InR/insulin-like receptor. Recruits Pak to membranes, probably when dock/dreadlocks is associated with activated receptors. Required for guidance and targeting of photoreceptor (R cell) axon projections but not for axon outgrowth, differentiation or target induction in the developing eye. As part of a signaling pathway that involves the lbm/late bloomer protein, involved in synapse formation of the RP3 motorneuron at the muscle 7/6 cleft, probably by stimulating axon defasciculation from other SNb neurons. The polypeptide is SH2/SH3 adapter protein dreadlocks (Drosophila melanogaster (Fruit fly)).